The primary structure comprises 112 residues: MTELAQMKCEACQADAPKVTDAELAELIRMIPDWGVEVRDGIMQLERVYKFKNFKLAMEFTNKLADLAEEEFHHPGILTEWGKVTVTWWSHSIKGLHRNDFIMAAKTDQLLD.

It belongs to the pterin-4-alpha-carbinolamine dehydratase family.

The enzyme catalyses (4aS,6R)-4a-hydroxy-L-erythro-5,6,7,8-tetrahydrobiopterin = (6R)-L-erythro-6,7-dihydrobiopterin + H2O. This Shewanella loihica (strain ATCC BAA-1088 / PV-4) protein is Putative pterin-4-alpha-carbinolamine dehydratase.